The chain runs to 136 residues: Large ribosomal subunit protein uL16 (136 aa).

It belongs to the universal ribosomal protein uL16 family. Part of the 50S ribosomal subunit.

Binds 23S rRNA and is also seen to make contacts with the A and possibly P site tRNAs. This Ehrlichia ruminantium (strain Gardel) protein is Large ribosomal subunit protein uL16.